We begin with the raw amino-acid sequence, 417 residues long: Sulfate adenylyltransferase (417 aa).

The span at 1–10 (MTSITANQKP) shows a compositional bias: polar residues. The disordered stretch occupies residues 1-20 (MTSITANQKPSKLVPPHGSP).

It belongs to the sulfate adenylyltransferase family.

It catalyses the reaction sulfate + ATP + H(+) = adenosine 5'-phosphosulfate + diphosphate. The protein operates within sulfur metabolism; hydrogen sulfide biosynthesis; sulfite from sulfate: step 1/3. The sequence is that of Sulfate adenylyltransferase from Psychrobacter arcticus (strain DSM 17307 / VKM B-2377 / 273-4).